Consider the following 217-residue polypeptide: Peptide methionine sulfoxide reductase MsrA (217 aa).

Cys-56 is a catalytic residue.

It belongs to the MsrA Met sulfoxide reductase family.

It catalyses the reaction L-methionyl-[protein] + [thioredoxin]-disulfide + H2O = L-methionyl-(S)-S-oxide-[protein] + [thioredoxin]-dithiol. It carries out the reaction [thioredoxin]-disulfide + L-methionine + H2O = L-methionine (S)-S-oxide + [thioredoxin]-dithiol. Has an important function as a repair enzyme for proteins that have been inactivated by oxidation. Catalyzes the reversible oxidation-reduction of methionine sulfoxide in proteins to methionine. This is Peptide methionine sulfoxide reductase MsrA from Corynebacterium melassecola.